The chain runs to 130 residues: DNA-directed RNA polymerase subunit omega (130 aa).

The segment at 108 to 130 (TEEELLKGLEGLAPPEEQPEEDE) is disordered.

The protein belongs to the RNA polymerase subunit omega family. As to quaternary structure, the RNAP catalytic core consists of 2 alpha, 1 beta, 1 beta' and 1 omega subunit. When a sigma factor is associated with the core the holoenzyme is formed, which can initiate transcription.

The catalysed reaction is RNA(n) + a ribonucleoside 5'-triphosphate = RNA(n+1) + diphosphate. Functionally, promotes RNA polymerase assembly. Latches the N- and C-terminal regions of the beta' subunit thereby facilitating its interaction with the beta and alpha subunits. The sequence is that of DNA-directed RNA polymerase subunit omega from Rhodopseudomonas palustris (strain ATCC BAA-98 / CGA009).